An 86-amino-acid polypeptide reads, in one-letter code: Large ribosomal subunit protein uL23 (86 aa).

It belongs to the universal ribosomal protein uL23 family. Part of the 50S ribosomal subunit. Contacts protein L29.

Binds to 23S rRNA. One of the proteins that surrounds the polypeptide exit tunnel on the outside of the ribosome. This is Large ribosomal subunit protein uL23 from Methanobrevibacter smithii (strain ATCC 35061 / DSM 861 / OCM 144 / PS).